A 325-amino-acid chain; its full sequence is Reticulocalbin-1 (325 aa).

An N-terminal signal peptide occupies residues 1–23 (MARGGRLGLALGLLLALVLALRA). An N-linked (GlcNAc...) asparagine; partial glycan is attached at asparagine 47. Phosphoserine occurs at positions 49 and 74. 6 EF-hand domains span residues 73–108 (ESKE…VQKR), 109–144 (YIYD…YYLG), 160–195 (KMLP…EEFE), 197–232 (MKEI…HEDN), 238–273 (WVLS…QDYD), and 274–309 (HAQA…FVGS). 28 residues coordinate Ca(2+): aspartate 86, aspartate 88, aspartate 90, glutamate 97, aspartate 122, aspartate 124, aspartate 126, lysine 128, glutamate 133, aspartate 173, aspartate 175, aspartate 177, threonine 179, glutamate 184, aspartate 210, asparagine 212, aspartate 214, glutamate 221, aspartate 251, asparagine 253, aspartate 255, lysine 257, glutamate 262, aspartate 287, asparagine 289, aspartate 291, methionine 293, and glutamate 298. Residues 322 to 325 (HDEL) carry the Prevents secretion from ER motif.

Belongs to the CREC family. In terms of processing, O-glycosylated. O-mannosylated by POMT1 and POMT2 and elongated by POMGNT1.

It localises to the endoplasmic reticulum lumen. Functionally, may regulate calcium-dependent activities in the endoplasmic reticulum lumen or post-ER compartment. In Mus musculus (Mouse), this protein is Reticulocalbin-1 (Rcn1).